Here is a 279-residue protein sequence, read N- to C-terminus: Large ribosomal subunit protein uL2 (279 aa).

Residues 216 to 279 form a disordered region; that stretch reads KRPSVRGVVM…IQKRKRNRNR (64 aa). Over residues 270-279 the composition is skewed to basic residues; that stretch reads IQKRKRNRNR.

It belongs to the universal ribosomal protein uL2 family. Part of the 50S ribosomal subunit. Forms a bridge to the 30S subunit in the 70S ribosome.

One of the primary rRNA binding proteins. Required for association of the 30S and 50S subunits to form the 70S ribosome, for tRNA binding and peptide bond formation. It has been suggested to have peptidyltransferase activity; this is somewhat controversial. Makes several contacts with the 16S rRNA in the 70S ribosome. This is Large ribosomal subunit protein uL2 from Leptospira interrogans serogroup Icterohaemorrhagiae serovar copenhageni (strain Fiocruz L1-130).